Reading from the N-terminus, the 349-residue chain is GTP 3',8-cyclase (349 aa).

The 226-residue stretch at 24 to 249 folds into the Radical SAM core domain; the sequence is PFGRAVTYLR…KDMSYRTGGP (226 aa). R33 is a binding site for GTP. [4Fe-4S] cluster-binding residues include C40 and C44. S-adenosyl-L-methionine is bound at residue Y46. C47 provides a ligand contact to [4Fe-4S] cluster. GTP is bound at residue R82. G86 is an S-adenosyl-L-methionine binding site. Residue T116 coordinates GTP. S-adenosyl-L-methionine is bound at residue S140. K176 is a GTP binding site. S-adenosyl-L-methionine is bound at residue M210. [4Fe-4S] cluster-binding residues include C273 and C276. 278 to 280 is a binding site for GTP; that stretch reads RVR. Residue C290 participates in [4Fe-4S] cluster binding.

This sequence belongs to the radical SAM superfamily. MoaA family. Monomer and homodimer. It depends on [4Fe-4S] cluster as a cofactor.

The catalysed reaction is GTP + AH2 + S-adenosyl-L-methionine = (8S)-3',8-cyclo-7,8-dihydroguanosine 5'-triphosphate + 5'-deoxyadenosine + L-methionine + A + H(+). The protein operates within cofactor biosynthesis; molybdopterin biosynthesis. Functionally, catalyzes the cyclization of GTP to (8S)-3',8-cyclo-7,8-dihydroguanosine 5'-triphosphate. The protein is GTP 3',8-cyclase of Sinorhizobium medicae (strain WSM419) (Ensifer medicae).